The following is a 137-amino-acid chain: Hemoglobin subunit beta (137 aa).

A Globin domain is found at 3–137 (HWTQEERDEI…VIDAISKQYH (135 aa)). Heme b contacts are provided by histidine 54 and histidine 83.

Belongs to the globin family. As to quaternary structure, heterotetramer of two alpha chains and two beta chains. In terms of tissue distribution, red blood cells.

In terms of biological role, involved in oxygen transport from gills to the various peripheral tissues. The sequence is that of Hemoglobin subunit beta (HBB) from Mustelus griseus (Spotless smooth-hound).